Consider the following 451-residue polypeptide: Chromosomal replication initiator protein DnaA (451 aa).

A domain I, interacts with DnaA modulators region spans residues 1-73 (MQDNLPQIWE…SNALKQTTSK (73 aa)). The interval 73-113 (KNFEIRFIVPSEEKISKTEESQKKLEGSVNISVASDQFVSN) is domain II. The interval 114 to 330 (NLNPKYTFDT…GALIRIVAYS (217 aa)) is domain III, AAA+ region. Gly158, Gly160, Lys161, and Thr162 together coordinate ATP. The segment at 331–451 (SLTNSEITVE…ERIAKEIKGD (121 aa)) is domain IV, binds dsDNA.

The protein belongs to the DnaA family. As to quaternary structure, oligomerizes as a right-handed, spiral filament on DNA at oriC.

The protein resides in the cytoplasm. Functionally, plays an essential role in the initiation and regulation of chromosomal replication. ATP-DnaA binds to the origin of replication (oriC) to initiate formation of the DNA replication initiation complex once per cell cycle. Binds the DnaA box (a 9 base pair repeat at the origin) and separates the double-stranded (ds)DNA. Forms a right-handed helical filament on oriC DNA; dsDNA binds to the exterior of the filament while single-stranded (ss)DNA is stabiized in the filament's interior. The ATP-DnaA-oriC complex binds and stabilizes one strand of the AT-rich DNA unwinding element (DUE), permitting loading of DNA polymerase. After initiation quickly degrades to an ADP-DnaA complex that is not apt for DNA replication. Binds acidic phospholipids. In Alkaliphilus oremlandii (strain OhILAs) (Clostridium oremlandii (strain OhILAs)), this protein is Chromosomal replication initiator protein DnaA.